The primary structure comprises 541 residues: 2-succinyl-5-enolpyruvyl-6-hydroxy-3-cyclohexene-1-carboxylate synthase (541 aa).

This sequence belongs to the TPP enzyme family. MenD subfamily. As to quaternary structure, homodimer. Requires Mg(2+) as cofactor. Mn(2+) serves as cofactor. Thiamine diphosphate is required as a cofactor.

The catalysed reaction is isochorismate + 2-oxoglutarate + H(+) = 5-enolpyruvoyl-6-hydroxy-2-succinyl-cyclohex-3-ene-1-carboxylate + CO2. The protein operates within quinol/quinone metabolism; 1,4-dihydroxy-2-naphthoate biosynthesis; 1,4-dihydroxy-2-naphthoate from chorismate: step 2/7. Its pathway is quinol/quinone metabolism; menaquinone biosynthesis. In terms of biological role, catalyzes the thiamine diphosphate-dependent decarboxylation of 2-oxoglutarate and the subsequent addition of the resulting succinic semialdehyde-thiamine pyrophosphate anion to isochorismate to yield 2-succinyl-5-enolpyruvyl-6-hydroxy-3-cyclohexene-1-carboxylate (SEPHCHC). The polypeptide is 2-succinyl-5-enolpyruvyl-6-hydroxy-3-cyclohexene-1-carboxylate synthase (Rhodococcus jostii (strain RHA1)).